We begin with the raw amino-acid sequence, 496 residues long: Probable cytosol aminopeptidase (496 aa).

Residues lysine 266 and aspartate 271 each contribute to the Mn(2+) site. Residue lysine 278 is part of the active site. 3 residues coordinate Mn(2+): aspartate 289, aspartate 348, and glutamate 350. Residue arginine 352 is part of the active site.

This sequence belongs to the peptidase M17 family. It depends on Mn(2+) as a cofactor.

It localises to the cytoplasm. The catalysed reaction is Release of an N-terminal amino acid, Xaa-|-Yaa-, in which Xaa is preferably Leu, but may be other amino acids including Pro although not Arg or Lys, and Yaa may be Pro. Amino acid amides and methyl esters are also readily hydrolyzed, but rates on arylamides are exceedingly low.. It carries out the reaction Release of an N-terminal amino acid, preferentially leucine, but not glutamic or aspartic acids.. Functionally, presumably involved in the processing and regular turnover of intracellular proteins. Catalyzes the removal of unsubstituted N-terminal amino acids from various peptides. The sequence is that of Probable cytosol aminopeptidase from Pseudomonas fluorescens (strain Pf0-1).